We begin with the raw amino-acid sequence, 174 residues long: Stigma-specific STIG1-like protein 4 (174 aa).

Residues 1–25 form the signal peptide; that stretch reads MMSIKLTLCALIFFLLNSLLHHVLG. The interval 140–174 is disordered; that stretch reads PSSQPGKRHRRHKFHRPRPPPSPDSKLNYDDHDDE. Residues 145–157 are compositionally biased toward basic residues; that stretch reads GKRHRRHKFHRPR.

It belongs to the STIG1 family.

It localises to the secreted. Functionally, endosperm-specific cysteine-rich protein that acts downstream of BHLH95/ZOU to modify the interface between embryo and endosperm and mediate the separation of these two tissues during seed development. Necessary for the biogenesis of the embryo sheath, an extracuticular endosperm-derived structure at the surface of the embryo. Required for the separation of embryo and endosperm, and for normal progression of the embryo through the endosperm tissue. Required for the formation of a normal embryonic cuticle. This is Stigma-specific STIG1-like protein 4 from Arabidopsis thaliana (Mouse-ear cress).